The following is a 153-amino-acid chain: uncharacterized protein (153 aa).

The protein resides in the mitochondrion. This is an uncharacterized protein from Arabidopsis thaliana (Mouse-ear cress).